The primary structure comprises 236 residues: Syntaxin-8 (236 aa).

The Cytoplasmic segment spans residues 1–215 (MAPDPWFSTY…MVDRKSASCG (215 aa)). The stretch at 42-65 (VTIRALLQNLKEKIALLKDLLLRA) forms a coiled coil. A t-SNARE coiled-coil homology domain is found at 145 to 207 (QKIIQEQDAG…RNETRRVNMV (63 aa)). Phosphoserine is present on Ser160. A helical; Anchor for type IV membrane protein membrane pass occupies residues 216–232 (MIMVILLLLVAIVVVAV). Residues 233 to 236 (WPTN) lie on the Vesicular side of the membrane.

It belongs to the syntaxin family. In terms of assembly, forms a SNARE complex with STX7, VTI1B and VAMP8 which functions in the homotypic fusion of late endosomes. Part of the SNARE core complex containing STX7, VAMP8 and VTI1B. Interacts with VAMP8. Interacts with HECTD3. Interacts with TPC1. Post-translationally, ubiquitinated by HECTD3. As to expression, highly expressed in heart. Also found in brain, kidney, liver, lung, placenta, skeletal muscle, spleen and pancreas.

Its subcellular location is the membrane. In terms of biological role, vesicle trafficking protein that functions in the early secretory pathway, possibly by mediating retrograde transport from cis-Golgi membranes to the ER. This chain is Syntaxin-8 (STX8), found in Homo sapiens (Human).